The following is a 344-amino-acid chain: Methionine import ATP-binding protein MetN (344 aa).

Residues 2–241 form the ABC transporter domain; that stretch reads IELQGLSQRF…PQHEVTRAMI (240 aa). 38-45 is an ATP binding site; sequence GRSGAGKS.

The protein belongs to the ABC transporter superfamily. Methionine importer (TC 3.A.1.24) family. The complex is composed of two ATP-binding proteins (MetN), two transmembrane proteins (MetI) and a solute-binding protein (MetQ).

It localises to the cell inner membrane. The catalysed reaction is L-methionine(out) + ATP + H2O = L-methionine(in) + ADP + phosphate + H(+). It carries out the reaction D-methionine(out) + ATP + H2O = D-methionine(in) + ADP + phosphate + H(+). In terms of biological role, part of the ABC transporter complex MetNIQ involved in methionine import. Responsible for energy coupling to the transport system. The polypeptide is Methionine import ATP-binding protein MetN (Cupriavidus pinatubonensis (strain JMP 134 / LMG 1197) (Cupriavidus necator (strain JMP 134))).